Consider the following 160-residue polypeptide: MDSAASHSVACHSTKMVALGLYFTVVVFVLFITSVNLQSPATKTEKTPKISRLYFGTLEYVNATKDQELIDGVFDAILKRLNKLDVDNPHEKNVGRYDMTTLLCWAVNNDLLYRKYGENMEVIFQLAKKFYPERDDKDKDSLGINRSLGTSKLLKWELHG.

The chain crosses the membrane as a helical span at residues 17–37 (VALGLYFTVVVFVLFITSVNL). N-linked (GlcNAc...) asparagine glycosylation is found at N62 and N145.

In terms of tissue distribution, salivary gland (at protein level).

Its subcellular location is the membrane. In terms of biological role, (Microbial infection) Modulates replication of Zika virus in salivary glands. (Microbial infection) Modulates replication of dengue virus type 2 in salivary glands. Functionally, (Microbial infection) Modulates replication of chikungunya virus in salivary glands. The protein is Salivary gland broad-spectrum antiviral protein of Aedes aegypti (Yellowfever mosquito).